Here is a 501-residue protein sequence, read N- to C-terminus: Sucrose-6-phosphate hydrolase (501 aa).

Residues 44–47 (LLND), Gln63, 106–107 (YT), 167–168 (RD), and Glu222 contribute to the substrate site. Residue Asp47 is part of the active site.

Belongs to the glycosyl hydrolase 32 family.

It catalyses the reaction Hydrolysis of terminal non-reducing beta-D-fructofuranoside residues in beta-D-fructofuranosides.. The protein operates within glycan biosynthesis; sucrose metabolism. This is Sucrose-6-phosphate hydrolase (scrB) from Pediococcus pentosaceus.